A 62-amino-acid polypeptide reads, in one-letter code: Large ribosomal subunit protein bL33 (62 aa).

Belongs to the bacterial ribosomal protein bL33 family.

The sequence is that of Large ribosomal subunit protein bL33 from Trichodesmium erythraeum (strain IMS101).